Here is a 382-residue protein sequence, read N- to C-terminus: Sphingosine 1-phosphate receptor 1 (382 aa).

At Val-2 the chain carries N-acetylvaline. Over Val-2 to Lys-46 the chain is Extracellular. Lys-10 carries the post-translational modification N6-acetyllysine. A glycan (N-linked (GlcNAc...) asparagine) is linked at Asn-30. Residues Leu-47–Leu-68 form a helical membrane-spanning segment. Residues Thr-69–Tyr-82 lie on the Cytoplasmic side of the membrane. A helical membrane pass occupies residues Phe-83–Leu-104. The Extracellular portion of the chain corresponds to Ser-105–Gln-116. A helical transmembrane segment spans residues Trp-117–Ile-138. Arg-120–Glu-121 serves as a coordination point for sphing-4-enine 1-phosphate. Residues Ala-139 to Ser-160 are Cytoplasmic-facing. A helical membrane pass occupies residues Phe-161–Trp-182. Topologically, residues Asn-183–Pro-196 are extracellular. Cysteines 184 and 191 form a disulfide. The helical transmembrane segment at Leu-197–Ile-224 threads the bilayer. Over Tyr-225 to Thr-257 the chain is Cytoplasmic. A Phosphothreonine modification is found at Thr-236. The chain crosses the membrane as a helical span at residues Val-258 to Leu-278. Residue Phe-265–Trp-269 coordinates sphing-4-enine 1-phosphate. Residues Asp-279–Ile-289 are Extracellular-facing. A disulfide bridge links Cys-282 with Cys-287. Residues Leu-290 to Ile-310 traverse the membrane as a helical segment. The Cytoplasmic portion of the chain corresponds to Tyr-311 to Ser-382. A lipid anchor (S-palmitoyl cysteine) is attached at Cys-328. Residues Met-348 to Ser-382 form a disordered region. Residues Ser-351 and Ser-353 each carry the phosphoserine modification. The segment covering Ser-351–Gly-366 has biased composition (basic and acidic residues). A compositionally biased stretch (polar residues) spans Thr-371 to Ser-382.

It belongs to the G-protein coupled receptor 1 family. Interacts with GNAI1 and GNAI3. Interacts with CD69; this interaction promotes S1PR1 degradation. Post-translationally, palmitoylated by ZDHHC5. Palmitoylation is required for targeting to plasma membrane, enabling G(i) coupling. In terms of tissue distribution, expressed in a wide variety of tissues with highest levels in brain, heart and spleen. Lower levels found in kidney, liver, lung, muscle, placenta, thymus, and uterus. Very low levels in intestine, stomach and testis. According to PubMed:9931453, expressed modestly in apparent endothelial cells surrounding some blood vessels (e.g. aortic trunk).

Its subcellular location is the cell membrane. The protein localises to the endosome. The protein resides in the membrane raft. In terms of biological role, G-protein coupled receptor for the bioactive lysosphingolipid sphingosine 1-phosphate (S1P) that seems to be coupled to the G(i) subclass of heteromeric G proteins. Signaling leads to the activation of RAC1, SRC, PTK2/FAK1 and MAP kinases. Plays an important role in cell migration, probably via its role in the reorganization of the actin cytoskeleton and the formation of lamellipodia in response to stimuli that increase the activity of the sphingosine kinase SPHK1. Required for normal chemotaxis toward sphingosine 1-phosphate. Required for normal embryonic heart development and normal cardiac morphogenesis. Plays an important role in the regulation of sprouting angiogenesis and vascular maturation. Inhibits sprouting angiogenesis to prevent excessive sprouting during blood vessel development. Required for normal egress of mature T-cells from the thymus into the blood stream and into peripheral lymphoid organs. Plays a role in the migration of osteoclast precursor cells, the regulation of bone mineralization and bone homeostasis. Plays a role in responses to oxidized 1-palmitoyl-2-arachidonoyl-sn-glycero-3-phosphocholine by pulmonary endothelial cells and in the protection against ventilator-induced lung injury. This Mus musculus (Mouse) protein is Sphingosine 1-phosphate receptor 1.